Consider the following 219-residue polypeptide: Guanylate kinase (219 aa).

One can recognise a Guanylate kinase-like domain in the interval 15–194; it reads GLMFVLSSPS…AFAEVQSILK (180 aa). 22-29 serves as a coordination point for ATP; sequence SPSGAGKT.

It belongs to the guanylate kinase family.

It is found in the cytoplasm. The catalysed reaction is GMP + ATP = GDP + ADP. Functionally, essential for recycling GMP and indirectly, cGMP. The polypeptide is Guanylate kinase (Nitrobacter winogradskyi (strain ATCC 25391 / DSM 10237 / CIP 104748 / NCIMB 11846 / Nb-255)).